Here is a 256-residue protein sequence, read N- to C-terminus: Protein YABBY 4 (256 aa).

A C4-type zinc finger spans residues 30-57 (CNCCDTILAVGVPCSSLFKTVTVRCGHC). Residues 127-168 (SCASNAPAMQMPPAKPVQQEPELPKNAPASANRPPEKRQRVP) are disordered.

This sequence belongs to the YABBY family. Preferentially expressed in immature organs containing meristems and organ primordia. Expressed in phloem of developing vascular tissues of young seedling shoots. Expressed in the phloem of midvein vasculature of young leaves. Does not show polar expression pattern in leaf primordia.

It localises to the nucleus. In terms of biological role, seems to be associated with phloem cell differentiation. In Oryza sativa subsp. japonica (Rice), this protein is Protein YABBY 4 (YAB4).